The following is a 280-amino-acid chain: uncharacterized protein (280 aa).

Disordered regions lie at residues 20–41 (DVKK…QQQQ), 170–199 (INSP…KDKA), and 251–280 (GNSK…SFSF). Positions 25-41 (QQQQQQQPQAPPQQQQQ) are enriched in low complexity. Residues 178-199 (EEEKPQLSKKEEPEWLKGKDKA) are compositionally biased toward basic and acidic residues.

This is an uncharacterized protein from Dictyostelium discoideum (Social amoeba).